A 229-amino-acid polypeptide reads, in one-letter code: C-&gt;U-editing enzyme APOBEC-1 (229 aa).

Residues 10–134 enclose the CMP/dCMP-type deaminase domain; that stretch reads VDPTLRRRIE…PRNRQGLRDL (125 aa). Residue H61 coordinates Zn(2+). The active-site Proton donor is the E63. The Zn(2+) site is built by C93 and C96.

Belongs to the cytidine and deoxycytidylate deaminase family. As to quaternary structure, homodimer. Interacts with A1CF; form an mRNA editing complex. Interacts with RBM47; form an mRNA editing complex. Found in a complex with CELF2/CUGBP2 and A1CF. Interacts with HNRPAB. Interacts with SYNCRIP. The cofactor is Zn(2+). In terms of tissue distribution, expressed in the liver as well as small intestine.

The protein localises to the cytoplasm. Its subcellular location is the nucleus. The catalysed reaction is a cytidine in mRNA + H2O + H(+) = a uridine in mRNA + NH4(+). The enzyme catalyses cytidine(6666) in apoB mRNA + H2O + H(+) = uridine(6666) in apoB mRNA + NH4(+). Functionally, cytidine deaminase catalyzing the cytidine to uridine postranscriptional editing of a variety of mRNAs. Form complexes with cofactors that confer differential editing activity and selectivity. Responsible for the postranscriptional editing of a CAA codon for Gln to a UAA codon for stop in the apolipoprotein B mRNA. Also involved in CGA (Arg) to UGA (Stop) editing in the NF1 mRNA. May also play a role in the epigenetic regulation of gene expression by participating in DNA demethylation. The chain is C-&gt;U-editing enzyme APOBEC-1 from Rattus norvegicus (Rat).